A 190-amino-acid chain; its full sequence is Putative hydrolase YdeN (190 aa).

Residues S71, D137, and H164 each act as charge relay system in the active site.

This sequence belongs to the RBBP9 family.

This chain is Putative hydrolase YdeN (ydeN), found in Bacillus subtilis (strain 168).